The following is a 380-amino-acid chain: Cytochrome b (380 aa).

4 consecutive transmembrane segments (helical) span residues 34–54 (FGSL…LLAT), 78–99 (WLIR…YLHI), 114–134 (WNTG…GYVL), and 179–199 (FFAL…IHLT). Residues histidine 84 and histidine 98 each coordinate heme b. Residues histidine 183 and histidine 197 each contribute to the heme b site. Histidine 202 is a binding site for a ubiquinone. The next 4 helical transmembrane spans lie at 227–247 (LKDI…ALFS), 289–309 (LGGV…PLLH), 321–341 (FSQF…WVGS), and 348–368 (FIII…LLFP).

This sequence belongs to the cytochrome b family. In terms of assembly, the cytochrome bc1 complex contains 11 subunits: 3 respiratory subunits (MT-CYB, CYC1 and UQCRFS1), 2 core proteins (UQCRC1 and UQCRC2) and 6 low-molecular weight proteins (UQCRH/QCR6, UQCRB/QCR7, UQCRQ/QCR8, UQCR10/QCR9, UQCR11/QCR10 and a cleavage product of UQCRFS1). This cytochrome bc1 complex then forms a dimer. Heme b is required as a cofactor.

It is found in the mitochondrion inner membrane. Component of the ubiquinol-cytochrome c reductase complex (complex III or cytochrome b-c1 complex) that is part of the mitochondrial respiratory chain. The b-c1 complex mediates electron transfer from ubiquinol to cytochrome c. Contributes to the generation of a proton gradient across the mitochondrial membrane that is then used for ATP synthesis. The polypeptide is Cytochrome b (MT-CYB) (Alca torda (Razorbill)).